Here is a 474-residue protein sequence, read N- to C-terminus: Aspartyl/glutamyl-tRNA(Asn/Gln) amidotransferase subunit B (474 aa).

Belongs to the GatB/GatE family. GatB subfamily. Heterotrimer of A, B and C subunits.

It catalyses the reaction L-glutamyl-tRNA(Gln) + L-glutamine + ATP + H2O = L-glutaminyl-tRNA(Gln) + L-glutamate + ADP + phosphate + H(+). The enzyme catalyses L-aspartyl-tRNA(Asn) + L-glutamine + ATP + H2O = L-asparaginyl-tRNA(Asn) + L-glutamate + ADP + phosphate + 2 H(+). Functionally, allows the formation of correctly charged Asn-tRNA(Asn) or Gln-tRNA(Gln) through the transamidation of misacylated Asp-tRNA(Asn) or Glu-tRNA(Gln) in organisms which lack either or both of asparaginyl-tRNA or glutaminyl-tRNA synthetases. The reaction takes place in the presence of glutamine and ATP through an activated phospho-Asp-tRNA(Asn) or phospho-Glu-tRNA(Gln). This chain is Aspartyl/glutamyl-tRNA(Asn/Gln) amidotransferase subunit B, found in Limosilactobacillus fermentum (strain NBRC 3956 / LMG 18251) (Lactobacillus fermentum).